Here is a 206-residue protein sequence, read N- to C-terminus: GTP cyclohydrolase 1 (206 aa).

Residues 1-17 show a composition bias toward basic and acidic residues; that stretch reads MDAVTPKKDIPRPDSVR. Residues 1-23 are disordered; the sequence is MDAVTPKKDIPRPDSVRRPSQQE. Positions 95, 98, and 166 each coordinate Zn(2+).

Belongs to the GTP cyclohydrolase I family. In terms of assembly, toroid-shaped homodecamer, composed of two pentamers of five dimers.

It carries out the reaction GTP + H2O = 7,8-dihydroneopterin 3'-triphosphate + formate + H(+). Its pathway is cofactor biosynthesis; 7,8-dihydroneopterin triphosphate biosynthesis; 7,8-dihydroneopterin triphosphate from GTP: step 1/1. The chain is GTP cyclohydrolase 1 from Hyphomonas neptunium (strain ATCC 15444).